Consider the following 1235-residue polypeptide: ATP-dependent helicase/nuclease subunit A (1235 aa).

A UvrD-like helicase ATP-binding domain is found at 12–482 (SLWTDDQWKA…IDLSQNFRSR (471 aa)). 33 to 40 (AAAGSGKT) is a binding site for ATP. The UvrD-like helicase C-terminal domain occupies 509–800 (AAELTLGASF…RMMTIHASKG (292 aa)).

This sequence belongs to the helicase family. AddA subfamily. In terms of assembly, heterodimer of AddA and AddB/RexB. Requires Mg(2+) as cofactor.

The enzyme catalyses Couples ATP hydrolysis with the unwinding of duplex DNA by translocating in the 3'-5' direction.. The catalysed reaction is ATP + H2O = ADP + phosphate + H(+). Its function is as follows. The heterodimer acts as both an ATP-dependent DNA helicase and an ATP-dependent, dual-direction single-stranded exonuclease. Recognizes the chi site generating a DNA molecule suitable for the initiation of homologous recombination. The AddA nuclease domain is required for chi fragment generation; this subunit has the helicase and 3' -&gt; 5' nuclease activities. The polypeptide is ATP-dependent helicase/nuclease subunit A (Listeria monocytogenes serotype 4b (strain F2365)).